A 258-amino-acid chain; its full sequence is Thrombin-like enzyme ancrod-2 (258 aa).

The first 18 residues, 1–18 (MVLIRVLANLVILQLSYA), serve as a signal peptide directing secretion. A propeptide spanning residues 19-24 (QKSSEL) is cleaved from the precursor. Positions 25 to 251 (VIGGDECNIN…HLHWILSIMA (227 aa)) constitute a Peptidase S1 domain. Cystine bridges form between Cys-31/Cys-165, Cys-52/Cys-68, Cys-102/Cys-256, Cys-144/Cys-212, Cys-176/Cys-191, and Cys-202/Cys-227. Active-site charge relay system residues include His-67 and Asp-112. Asn-123 and Asn-172 each carry an N-linked (GlcNAc...) asparagine glycan. Catalysis depends on Ser-206, which acts as the Charge relay system. An N-linked (GlcNAc...) asparagine glycan is attached at Asn-253.

The protein belongs to the peptidase S1 family. Snake venom subfamily. Monomer. As to expression, expressed by the venom gland.

It localises to the secreted. It carries out the reaction Selective cleavage of Arg-|-Xaa bond in fibrinogen, to form fibrin, and release fibrinopeptide A. The specificity of further degradation of fibrinogen varies with species origin of the enzyme.. Functionally, thrombin-like snake venom serine protease. Cleaves fibrinogen (FGA) to split of fibrinopeptides AM, AO, and AY; the aberrant fibrinogen is then incapable of being cross-linked, forming easily dispersible clots. This chain is Thrombin-like enzyme ancrod-2, found in Calloselasma rhodostoma (Malayan pit viper).